Consider the following 130-residue polypeptide: Small ribosomal subunit protein uS9 (130 aa).

Residues 109-130 are disordered; the sequence is RVKERKKPGLKKARKARQFSKR. A compositionally biased stretch (basic residues) spans 111–130; that stretch reads KERKKPGLKKARKARQFSKR.

It belongs to the universal ribosomal protein uS9 family.

In Mycoplasma mobile (strain ATCC 43663 / 163K / NCTC 11711) (Mesomycoplasma mobile), this protein is Small ribosomal subunit protein uS9.